The primary structure comprises 727 residues: Engulfment and cell motility protein 1 (727 aa).

Tyrosine 18 is subject to Phosphotyrosine; by HCK. Lysine 100 and lysine 105 each carry N6-acetyllysine. A Phosphotyrosine; by HCK modification is found at tyrosine 216. An ELMO domain is found at 319 to 492; sequence AQRDIIFELR…VVKEQVMRAL (174 aa). At serine 344 the chain carries Phosphoserine. A phosphotyrosine; by HCK mark is found at tyrosine 395 and tyrosine 511. In terms of domain architecture, PH spans 555-676; the sequence is RLVEGTCFRK…DGLNALLGKD (122 aa). The SH3-binding signature appears at 707-714; that stretch reads PDAPPPIP. Tyrosine 720 bears the Phosphotyrosine; by HCK mark.

Interacts with ADGRB1. Interacts directly with the SH3-domain of DOCK1 via its SH3-binding site. Part of a complex with DOCK1 and RAC1. Part of a complex with DOCK1 and CRK isoform CRK-II. Interacts with PLEKHG6. Interacts with HCK (via SH3 domain). Interacts with ADGRB3. Interacts with DOCK5. In terms of processing, phosphorylated by HCK. Widely expressed, with a higher expression in the spleen and placenta.

The protein localises to the cytoplasm. It is found in the cell membrane. Its function is as follows. Involved in cytoskeletal rearrangements required for phagocytosis of apoptotic cells and cell motility. Acts in association with DOCK1 and CRK. Was initially proposed to be required in complex with DOCK1 to activate Rac Rho small GTPases. May enhance the guanine nucleotide exchange factor (GEF) activity of DOCK1. The polypeptide is Engulfment and cell motility protein 1 (ELMO1) (Homo sapiens (Human)).